A 194-amino-acid chain; its full sequence is Thymidine kinase (194 aa).

Residues 15–22 (GSMFSGKS) and 88–91 (DEVQ) contribute to the ATP site. The active-site Proton acceptor is the E89. The Zn(2+) site is built by C145, C148, C183, and H186.

The protein belongs to the thymidine kinase family. Homotetramer.

Its subcellular location is the cytoplasm. It carries out the reaction thymidine + ATP = dTMP + ADP + H(+). The chain is Thymidine kinase from Bacillus velezensis (strain DSM 23117 / BGSC 10A6 / LMG 26770 / FZB42) (Bacillus amyloliquefaciens subsp. plantarum).